The sequence spans 701 residues: Glycine--tRNA ligase beta subunit (701 aa).

This sequence belongs to the class-II aminoacyl-tRNA synthetase family. As to quaternary structure, tetramer of two alpha and two beta subunits.

Its subcellular location is the cytoplasm. The catalysed reaction is tRNA(Gly) + glycine + ATP = glycyl-tRNA(Gly) + AMP + diphosphate. This is Glycine--tRNA ligase beta subunit from Nitratidesulfovibrio vulgaris (strain DSM 19637 / Miyazaki F) (Desulfovibrio vulgaris).